The following is a 204-amino-acid chain: VQ motif-containing protein 13 (204 aa).

Positions 1–12 (MEKSPRYRDKAK) are enriched in basic and acidic residues. A disordered region spans residues 1–26 (MEKSPRYRDKAKNLLPSPSSCTTTPT). Residues 16–26 (PSPSSCTTTPT) are compositionally biased toward low complexity. Ser17 bears the Phosphoserine mark. Positions 46 to 55 (FKQVVQLLTG) match the VQ motif. The interval 56–90 (IPKNPTHQPDPRFPPFHSIPPIKAVTNKKQSSSFR) is disordered. Residues Ser73 and Ser128 each carry the phosphoserine modification. Thr131 is subject to Phosphothreonine. The tract at residues 133–204 (LMSDPFYRPG…HSPAPSPHDH (72 aa)) is disordered. The segment covering 143 to 152 (SFSQSPSDSK) has biased composition (low complexity). Ser147 and Ser173 each carry phosphoserine. A phosphothreonine mark is found at Thr177 and Thr192. Residues Ser196 and Ser200 each carry the phosphoserine modification.

Post-translationally, phosphorylated on serine and threonine residues by MPK6.

It is found in the nucleus. Its function is as follows. May modulate WRKY transcription factor activities. This chain is VQ motif-containing protein 13, found in Arabidopsis thaliana (Mouse-ear cress).